An 86-amino-acid polypeptide reads, in one-letter code: MKEGIHPNYREVVFQDMSSDFSFITRSTIQTKDKIVKDGKEYPLAKIEVSSESHPFYTGTQKIMDTAGRVEKFRQKFGNKLGKAAK.

It belongs to the bacterial ribosomal protein bL31 family. Type B subfamily. In terms of assembly, part of the 50S ribosomal subunit.

In Cupriavidus necator (strain ATCC 17699 / DSM 428 / KCTC 22496 / NCIMB 10442 / H16 / Stanier 337) (Ralstonia eutropha), this protein is Large ribosomal subunit protein bL31B.